The primary structure comprises 87 residues: Small ribosomal subunit protein uS12m (87 aa).

Belongs to the universal ribosomal protein uS12 family.

It is found in the mitochondrion matrix. Its subcellular location is the kinetoplast. In terms of biological role, protein S12 is involved in the translation initiation step. This chain is Small ribosomal subunit protein uS12m (RPS12), found in Trypanoplasma borreli.